The sequence spans 507 residues: MGCWGRNRGRLLCMLALTFMFMVLEVVVSRVTSSLAMLSDSFHMLSDVLALVVALVAERFARRTHATQKNTFGWIRAEVMGALVNAIFLTGLCFAILLEAIERFIEPHEMQQPLVVLGVGVAGLLVNVLGLCLFHHHSGFSQDSGHGHSHGGHGHGHGLPKGPRVKSTRPGSSDINVAPGEQGPDQEETNTLVANTSNSNGLKLDPADPENPRSGDTVEVQVNGNLVREPDHMELEEDRAGQLNMRGVFLHVLGDALGSVIVVVNALVFYFSWKGCSEGDFCVNPCFPDPCKAFVEIINSTHASVYEAGPCWVLYLDPTLCVVMVCILLYTTYPLLKESALILLQTVPKQIDIRNLIKELRNVEGVEEVHELHVWQLAGSRIIATAHIKCEDPTSYMEVAKTIKDVFHNHGIHATTIQPEFASVGSKSSVVPCELACRTQCALKQCCGTLPQAPSGKDAEKTPAVSISCLELSNNLEKKPRRTKAENIPAVVIEIKNMPNKQPESSL.

Topologically, residues 1–10 (MGCWGRNRGR) are cytoplasmic. Residues 11–31 (LLCMLALTFMFMVLEVVVSRV) form a helical membrane-spanning segment. Residues 32–35 (TSSL) lie on the Extracellular side of the membrane. A helical membrane pass occupies residues 36–56 (AMLSDSFHMLSDVLALVVALV). Positions 43 and 47 each coordinate Zn(2+). Topologically, residues 57–78 (AERFARRTHATQKNTFGWIRAE) are cytoplasmic. A helical transmembrane segment spans residues 79 to 99 (VMGALVNAIFLTGLCFAILLE). At 100 to 113 (AIERFIEPHEMQQP) the chain is on the extracellular side. A helical membrane pass occupies residues 114-134 (LVVLGVGVAGLLVNVLGLCLF). Residues 135-248 (HHHSGFSQDS…RAGQLNMRGV (114 aa)) lie on the Cytoplasmic side of the membrane. Residues 142–217 (QDSGHGHSHG…DPENPRSGDT (76 aa)) are disordered. A 6 X 2 AA approximate repeats of H-G region spans residues 146 to 158 (HGHSHGGHGHGHG). Residues 147-167 (GHSHGGHGHGHGLPKGPRVKS) are compositionally biased toward basic residues. A compositionally biased stretch (polar residues) spans 189–201 (TNTLVANTSNSNG). A helical membrane pass occupies residues 249–269 (FLHVLGDALGSVIVVVNALVF). Zn(2+)-binding residues include histidine 251 and aspartate 255. Over 270–308 (YFSWKGCSEGDFCVNPCFPDPCKAFVEIINSTHASVYEA) the chain is Extracellular. N-linked (GlcNAc...) asparagine glycosylation is present at asparagine 299. The helical transmembrane segment at 309–329 (GPCWVLYLDPTLCVVMVCILL) threads the bilayer. Residues 330 to 507 (YTTYPLLKES…MPNKQPESSL (178 aa)) are Cytoplasmic-facing. Serine 506 is subject to Phosphoserine.

It belongs to the cation diffusion facilitator (CDF) transporter (TC 2.A.4) family. SLC30A subfamily. As to quaternary structure, homodimer. Interacts with TMEM163. Interacts and forms a complex with TMC6 and TMC8; the interaction regulates zinc transport into the ER. In terms of assembly, (Microbial infection) Interacts with human papillomavirus 16/HPV16 protein E5; the interaction alleviates SLC30A1-mediated transcription factors inhibition. N-glycosylated at Asn-299. N-glycosylation promotes endocytosis and degradation through the proteasomal or lysosomal pathways.

It is found in the cell membrane. Its subcellular location is the basolateral cell membrane. The protein resides in the cytoplasmic vesicle membrane. It localises to the cytoplasm. The protein localises to the endoplasmic reticulum membrane. It is found in the golgi apparatus membrane. Its subcellular location is the nucleus membrane. It carries out the reaction Zn(2+)(in) + 2 H(+)(out) = Zn(2+)(out) + 2 H(+)(in). In terms of biological role, zinc ion:proton antiporter that could function at the plasma membrane mediating zinc efflux from cells against its electrochemical gradient protecting them from intracellular zinc accumulation and toxicity. Alternatively, could prevent the transport to the plasma membrane of CACNB2, the L-type calcium channels regulatory subunit, through a yet to be defined mechanism. By modulating the expression of these channels at the plasma membrane, could prevent calcium and zinc influx into cells. By the same mechanism, could also prevent L-type calcium channels-mediated heavy metal influx into cells. In some cells, could also function as a zinc ion:proton antiporter mediating zinc entry into the lumen of cytoplasmic vesicles. In macrophages, can increase zinc ions concentration into the lumen of cytoplasmic vesicles containing engulfed bacteria and could help inactivate them. Forms a complex with TMC6/EVER1 and TMC8/EVER2 at the ER membrane of keratynocytes which facilitates zinc uptake into the ER. Down-regulates the activity of transcription factors induced by zinc and cytokines. The chain is Proton-coupled zinc antiporter SLC30A1 from Homo sapiens (Human).